The primary structure comprises 149 residues: D-aminoacyl-tRNA deacylase (149 aa).

The Gly-cisPro motif, important for rejection of L-amino acids motif lies at 137-138 (GP).

The protein belongs to the DTD family. In terms of assembly, homodimer.

The protein resides in the cytoplasm. It catalyses the reaction glycyl-tRNA(Ala) + H2O = tRNA(Ala) + glycine + H(+). The catalysed reaction is a D-aminoacyl-tRNA + H2O = a tRNA + a D-alpha-amino acid + H(+). Its function is as follows. An aminoacyl-tRNA editing enzyme that deacylates mischarged D-aminoacyl-tRNAs. Also deacylates mischarged glycyl-tRNA(Ala), protecting cells against glycine mischarging by AlaRS. Acts via tRNA-based rather than protein-based catalysis; rejects L-amino acids rather than detecting D-amino acids in the active site. By recycling D-aminoacyl-tRNA to D-amino acids and free tRNA molecules, this enzyme counteracts the toxicity associated with the formation of D-aminoacyl-tRNA entities in vivo and helps enforce protein L-homochirality. The polypeptide is D-aminoacyl-tRNA deacylase (Clostridium acetobutylicum (strain ATCC 824 / DSM 792 / JCM 1419 / IAM 19013 / LMG 5710 / NBRC 13948 / NRRL B-527 / VKM B-1787 / 2291 / W)).